Here is a 490-residue protein sequence, read N- to C-terminus: Glutamate--tRNA ligase (490 aa).

The short motif at 13–23 is the 'HIGH' region element; that stretch reads PSPTGTPHVGL. The short motif at 257-261 is the 'KMSKS' region element; sequence KLSKR. Residue lysine 260 participates in ATP binding.

This sequence belongs to the class-I aminoacyl-tRNA synthetase family. Glutamate--tRNA ligase type 1 subfamily. Monomer.

The protein localises to the cytoplasm. The catalysed reaction is tRNA(Glu) + L-glutamate + ATP = L-glutamyl-tRNA(Glu) + AMP + diphosphate. Catalyzes the attachment of glutamate to tRNA(Glu) in a two-step reaction: glutamate is first activated by ATP to form Glu-AMP and then transferred to the acceptor end of tRNA(Glu). This is Glutamate--tRNA ligase from Mycobacterium bovis (strain BCG / Pasteur 1173P2).